The chain runs to 335 residues: Probable cytosolic iron-sulfur protein assembly protein Ciao1 (335 aa).

WD repeat units lie at residues 12-51, 57-96, 101-140, 146-185, 192-231, 250-289, and 301-335; these read GHKG…WSTK, GHKR…FECN, GHEN…EFEC, AHTQ…SDWD, SHTS…NDAG, QHSR…KRDE, and AHEQ…KVDD.

Belongs to the WD repeat CIA1 family.

Its function is as follows. Essential component of the cytosolic iron-sulfur (Fe/S) protein assembly machinery. Required for the maturation of extramitochondrial Fe/S proteins. The polypeptide is Probable cytosolic iron-sulfur protein assembly protein Ciao1 (Drosophila pseudoobscura pseudoobscura (Fruit fly)).